A 241-amino-acid polypeptide reads, in one-letter code: MICKYIYLAIFVFGTARIPKPSACLPGDFWKTKQEIEVQKKIDEFNQYRISALWSMVSKMEDPTLSGLDGRYIVVDQNQLYLSPISKKSEKLIFRFNLNHRGYLEVKSGFRAFIENKYSPLVFHATSWTNGFSIDVQKTNPISSYTPFVMQYLNSPWFSACRVESGNWQVFVGRMNMNEHEHCYPMSLIMKREDTWLRYYHKNNRNPIDWKLVQDCAMWPDGYPGTGRESEKGSNLEAITR.

It localises to the mitochondrion. Has a role in meiosis. This is Meiotically up-regulated gene 130 protein (mug130) from Schizosaccharomyces pombe (strain 972 / ATCC 24843) (Fission yeast).